A 451-amino-acid chain; its full sequence is UDP-glycosyltransferase 13 (451 aa).

Residue histidine 15 is the Proton acceptor of the active site. Histidine 15 is an an anthocyanidin binding site. Aspartate 93 functions as the Charge relay in the catalytic mechanism. Residues alanine 326, glutamine 328, histidine 343, tryptophan 346, asparagine 347, serine 348, and glutamate 351 each contribute to the UDP-alpha-D-glucose site. Alanine 366 is a binding site for an anthocyanidin. UDP-alpha-D-glucose-binding residues include glutamate 367 and glutamine 368.

The protein belongs to the UDP-glycosyltransferase family. As to expression, expressed in roots. Detected in stems and leaves.

The catalysed reaction is a 7-hydroxyisoflavone + UDP-alpha-D-glucose = a 7-hydroxyisoflavone 7-O-beta-D-glucoside + UDP + H(+). Functionally, isoflavone 7-O-glucosyltransferase converting daidzein to daidzin, genistein to genistin and formononetin to ononin. Shows some activity toward the flavanones liquiritigenin and naringenin, but not toward cyanidin, isoliquiritigenin, apigenin, luteolin, kaempferol, quercetin, daidzin and puerarin. The polypeptide is UDP-glycosyltransferase 13 (Pueraria montana var. lobata (Kudzu vine)).